The chain runs to 623 residues: tRNA uridine 5-carboxymethylaminomethyl modification enzyme MnmG (623 aa).

10–15 (GGGHAG) is a binding site for FAD. An NAD(+)-binding site is contributed by 269–283 (GPRYCPSIEDKIVRF).

This sequence belongs to the MnmG family. In terms of assembly, homodimer. Heterotetramer of two MnmE and two MnmG subunits. Requires FAD as cofactor.

It localises to the cytoplasm. Functionally, NAD-binding protein involved in the addition of a carboxymethylaminomethyl (cmnm) group at the wobble position (U34) of certain tRNAs, forming tRNA-cmnm(5)s(2)U34. The protein is tRNA uridine 5-carboxymethylaminomethyl modification enzyme MnmG of Rhizobium meliloti (strain 1021) (Ensifer meliloti).